An 886-amino-acid chain; its full sequence is Alanine--tRNA ligase (886 aa).

His568, His572, Cys670, and His674 together coordinate Zn(2+).

It belongs to the class-II aminoacyl-tRNA synthetase family. Requires Zn(2+) as cofactor.

The protein localises to the cytoplasm. The enzyme catalyses tRNA(Ala) + L-alanine + ATP = L-alanyl-tRNA(Ala) + AMP + diphosphate. In terms of biological role, catalyzes the attachment of alanine to tRNA(Ala) in a two-step reaction: alanine is first activated by ATP to form Ala-AMP and then transferred to the acceptor end of tRNA(Ala). Also edits incorrectly charged Ser-tRNA(Ala) and Gly-tRNA(Ala) via its editing domain. This is Alanine--tRNA ligase from Prochlorococcus marinus (strain NATL2A).